The primary structure comprises 679 residues: Glycine--tRNA ligase beta subunit (679 aa).

It belongs to the class-II aminoacyl-tRNA synthetase family. As to quaternary structure, tetramer of two alpha and two beta subunits.

Its subcellular location is the cytoplasm. It catalyses the reaction tRNA(Gly) + glycine + ATP = glycyl-tRNA(Gly) + AMP + diphosphate. This Streptococcus pyogenes serotype M2 (strain MGAS10270) protein is Glycine--tRNA ligase beta subunit.